The chain runs to 589 residues: MQDLCEMWRHAVARVLSQLQGPAVEPVEGAQLVMEEPPEPGMGDIAFPLFLFAKRVRRSPAQLAQQLCTLLEEDTSMCAYGTPQARGPYLNVFLNKECVAAHTLDAIFAQGERYGHTQYLQGKRIMVEFSSPNTNKPLHVGHLRNNAIGESLSRIIAFCGADVFKVNIINDRGVHICKSMCAYQKFAHGKTPAHTGIKSDRFVGDWYVQFNRYAQQYPEEAEHDVRDLLQRWESADPHVRALWRTMNEWALRGIKQTYERTGISFDKLYFESETYTKGREEVRRGLACGVFYQMEDNSIWVDLSSLGLDKKALLRSDGTTMYITQDIGTAIFRAQDWPFDQLLYVVGNEQNYHFKVLFFVLRLLGYPWAQQLHHVSYGMVNLPHGRMKSREGTVVDADDILDRLHSAAEEEIAKKGRENALKHAQCIAENVAIAALHYFLLQVSPQKDMVFHPEESLSFNGNTGPYLQYMGARISSLLKKVQEDVEQKGPREVRCDPALLTHEAEWELVKALARFPACVTRAAQGHDPSVITGYLYTLSKSFSRFYHDCPILCEARPDYACARLELVRAVRIVLRTAMRLVLIPFLEEM.

The short motif at 132–142 is the 'HIGH' region element; it reads PNTNKPLHVGH.

The protein belongs to the class-I aminoacyl-tRNA synthetase family. Monomer.

It localises to the cytoplasm. The catalysed reaction is tRNA(Arg) + L-arginine + ATP = L-arginyl-tRNA(Arg) + AMP + diphosphate. In Treponema pallidum subsp. pallidum (strain SS14), this protein is Arginine--tRNA ligase.